Reading from the N-terminus, the 181-residue chain is RNA pyrophosphohydrolase (181 aa).

Positions 6–149 (GFRPNVGIIL…KRRVYTRALQ (144 aa)) constitute a Nudix hydrolase domain. A Nudix box motif is present at residues 38–59 (GGIKAQETPEEALFRELEEEVG). Residues 159-181 (GLPRQPPVGRPRRSAPPRGCRRA) are disordered. Positions 168-181 (RPRRSAPPRGCRRA) are enriched in basic residues.

This sequence belongs to the Nudix hydrolase family. RppH subfamily. A divalent metal cation is required as a cofactor.

Accelerates the degradation of transcripts by removing pyrophosphate from the 5'-end of triphosphorylated RNA, leading to a more labile monophosphorylated state that can stimulate subsequent ribonuclease cleavage. The protein is RNA pyrophosphohydrolase of Alkalilimnicola ehrlichii (strain ATCC BAA-1101 / DSM 17681 / MLHE-1).